The primary structure comprises 343 residues: UPF0157 protein YqkA (343 aa).

An N-acetyltransferase domain is found at 8-144 (KEATIAREIL…VKAAQGLLLS (137 aa)). The UPF0157 stretch occupies residues 135-343 (VKAAQGLLLS…ENDENGGFTL (209 aa)).

This sequence in the C-terminal section; belongs to the UPF0157 (GrpB) family.

In Bacillus subtilis (strain 168), this protein is UPF0157 protein YqkA (yqkA).